The chain runs to 121 residues: Large ribosomal subunit protein bL12 (121 aa).

Belongs to the bacterial ribosomal protein bL12 family. Homodimer. Part of the ribosomal stalk of the 50S ribosomal subunit. Forms a multimeric L10(L12)X complex, where L10 forms an elongated spine to which 2 to 4 L12 dimers bind in a sequential fashion. Binds GTP-bound translation factors.

In terms of biological role, forms part of the ribosomal stalk which helps the ribosome interact with GTP-bound translation factors. Is thus essential for accurate translation. The sequence is that of Large ribosomal subunit protein bL12 from Enterobacter sp. (strain 638).